Here is a 549-residue protein sequence, read N- to C-terminus: 65-kDa microtubule-associated protein 9 (549 aa).

3 coiled-coil regions span residues 36–123, 160–199, and 459–492; these read IEIE…ERKI, SLRK…CSVL, and GNRL…HQGQ. Positions 474-549 are disordered; sequence EEKEQERRRK…SFSTPLSRHG (76 aa). Over residues 481–490 the composition is skewed to basic residues; that stretch reads RRKRDLKKHQ. Residues Ser-501 and Ser-546 each carry the phosphoserine modification. Residues 514 to 549 show a composition bias toward polar residues; it reads VSTNKRFVSSPHTPQTDSPHSAKSNQSFSTPLSRHG.

This sequence belongs to the MAP65/ASE1 family. As to quaternary structure, forms dimer. Binds to microtubules (MT).

It is found in the nucleus. Its subcellular location is the cytoplasm. It localises to the cytoskeleton. The protein resides in the spindle pole. The chain is 65-kDa microtubule-associated protein 9 (MAP65-9) from Arabidopsis thaliana (Mouse-ear cress).